The primary structure comprises 108 residues: Thiosulfate sulfurtransferase GlpE (108 aa).

One can recognise a Rhodanese domain in the interval 17–105; that stretch reads QEKEAVLVDI…WQRQFPAEVA (89 aa). C65 acts as the Cysteine persulfide intermediate in catalysis.

Belongs to the GlpE family.

The protein localises to the cytoplasm. It carries out the reaction thiosulfate + hydrogen cyanide = thiocyanate + sulfite + 2 H(+). The enzyme catalyses thiosulfate + [thioredoxin]-dithiol = [thioredoxin]-disulfide + hydrogen sulfide + sulfite + 2 H(+). Its function is as follows. Transferase that catalyzes the transfer of sulfur from thiosulfate to thiophilic acceptors such as cyanide or dithiols. May function in a CysM-independent thiosulfate assimilation pathway by catalyzing the conversion of thiosulfate to sulfite, which can then be used for L-cysteine biosynthesis. This chain is Thiosulfate sulfurtransferase GlpE, found in Escherichia coli O8 (strain IAI1).